The primary structure comprises 539 residues: Acid-sensing ion channel 4-A (539 aa).

Residues 1-68 lie on the Cytoplasmic side of the membrane; it reads MPIEFVCKIK…SGRLGVRQTL (68 aa). Residues 69 to 89 form a helical membrane-spanning segment; the sequence is WALAFLVSLALFLYQAAKCAI. Topologically, residues 90–432 are extracellular; that stretch reads SYLEHPHVTA…EQKKAYDVAG (343 aa). Intrachain disulfides connect cysteine 116/cysteine 200 and cysteine 178/cysteine 185. Residues asparagine 136, asparagine 165, asparagine 179, asparagine 184, asparagine 206, and asparagine 241 are each glycosylated (N-linked (GlcNAc...) asparagine). 5 disulfide bridges follow: cysteine 294/cysteine 369, cysteine 313/cysteine 365, cysteine 317/cysteine 363, cysteine 326/cysteine 347, and cysteine 328/cysteine 340. Asparagine 370 is a glycosylation site (N-linked (GlcNAc...) asparagine). The helical transmembrane segment at 433 to 453 threads the bilayer; the sequence is LLGDIGGQMGLFIGASVLTIL. The GAS motif; ion selectivity filter motif lies at 446–448; it reads GAS. Topologically, residues 454–539 are cytoplasmic; sequence EILDYVYEVI…HHRVSEDFAC (86 aa). Positions 474 to 494 are disordered; the sequence is QRDDKKQTQQQQQASTVATVN.

The protein belongs to the amiloride-sensitive sodium channel (TC 1.A.6) family. ASIC4 subfamily. Homotrimer. Heterotrimer; with other ASIC proteins producing functional channels. Expressed in central nervous system.

It is found in the cell membrane. The enzyme catalyses Na(+)(in) = Na(+)(out). Inhibited by the diuretic drug amiloride. Its function is as follows. Could form pH-gated trimeric sodium channels and function as a postsynaptic excitatory receptors in the nervous system. In Danio rerio (Zebrafish), this protein is Acid-sensing ion channel 4-A.